A 161-amino-acid chain; its full sequence is Nucleotide-binding protein amb3630 (161 aa).

The protein belongs to the YajQ family.

In terms of biological role, nucleotide-binding protein. The sequence is that of Nucleotide-binding protein amb3630 from Paramagnetospirillum magneticum (strain ATCC 700264 / AMB-1) (Magnetospirillum magneticum).